The chain runs to 478 residues: Cysteine--tRNA ligase (478 aa).

Cysteine 29 provides a ligand contact to Zn(2+). The 'HIGH' region motif lies at 31 to 41 (PTVYDIPHIGN). Zn(2+)-binding residues include cysteine 216, histidine 241, and glutamate 245. Residues 274-278 (KMSKS) carry the 'KMSKS' region motif. Residue lysine 277 participates in ATP binding.

This sequence belongs to the class-I aminoacyl-tRNA synthetase family. Monomer. Requires Zn(2+) as cofactor.

The protein resides in the cytoplasm. It catalyses the reaction tRNA(Cys) + L-cysteine + ATP = L-cysteinyl-tRNA(Cys) + AMP + diphosphate. The polypeptide is Cysteine--tRNA ligase (Orientia tsutsugamushi (strain Ikeda) (Rickettsia tsutsugamushi)).